The primary structure comprises 63 residues: Frenatin 1.1 (63 aa).

Residues 1–22 (MAFLKKSLFLVLFLGLVSLSIC) form the signal peptide. Positions 23-49 (EKEKKEQEDEDENEEEKESEEGSEEKR) are excised as a propeptide. Residues 25-63 (EKKEQEDEDENEEEKESEEGSEEKRGLLDTLGGILGLGR) are disordered. Acidic residues predominate over residues 30–45 (EDEDENEEEKESEEGS). Position 61 is a leucine amide (Leu-61).

Expressed by the skin glands.

It is found in the secreted. In terms of biological role, antimicrobial peptide with selective activity. Is only active against Micrococcus luteus (MIC=25 ug/ml) and not against Bacillus cereus, Escherichia coli, Leuconostoc mesenteroides, Micrococcus luteus, Pastewella haemolytica, Staphylococcus aureus, Streptococcus faecalis and Streptococcus uberis. This Nyctimystes infrafrenatus (White-lipped tree frog) protein is Frenatin 1.1.